We begin with the raw amino-acid sequence, 160 residues long: MSHLPSSFDGAEQDVDEMTFLEKMTFHCKQQPLVPLGTLATTVAVILAAQNVRSGNKRKAQKYFRWRVGLQGATLVALVAGSFIYGTSQKERQSKEDALREKAKLREKLWIQELERRDEETQLRKKRAELARSRAKELEQETQGLQQELRDLQAKTSSSK.

The 92-residue stretch at 5–96 folds into the HIG1 domain; sequence PSSFDGAEQD…TSQKERQSKE (92 aa). 2 helical membrane passes run 33-50 and 63-85; these read LVPL…LAAQ and YFRW…SFIY. Positions 86-160 form a coiled coil; the sequence is GTSQKERQSK…DLQAKTSSSK (75 aa). Positions 135-160 are disordered; sequence AKELEQETQGLQQELRDLQAKTSSSK.

The protein belongs to the RCF1 family. In terms of assembly, associates with the respiratory chain complex III/complex IV supercomplex.

It localises to the mitochondrion membrane. In terms of biological role, cytochrome c oxidase subunit which plays a role in assembly of respiratory supercomplexes. The protein is Respiratory supercomplex factor 1, mitochondrial (RCF1) of Lachancea thermotolerans (strain ATCC 56472 / CBS 6340 / NRRL Y-8284) (Yeast).